The chain runs to 286 residues: 4-hydroxybenzoate octaprenyltransferase (286 aa).

7 helical membrane-spanning segments follow: residues 22-42, 45-65, 98-118, 143-163, 213-233, 238-255, and 266-286; these read IGTLLLLWPTLWALYLAEKAM, LSVLAIFIFGVFLMRSAGCVI, LFIVLVFCSFLLVLCLNLYTI, FFLGAAFGWSIPMAYGATIEA, IIALLQIITLIFLFSVGYLSQ, YFIVLAIAGLFFVYQCRL, and NAFLNNNYFGLTVFIAVLFGI.

This sequence belongs to the UbiA prenyltransferase family. The cofactor is Mg(2+).

The protein localises to the cell inner membrane. The enzyme catalyses all-trans-octaprenyl diphosphate + 4-hydroxybenzoate = 4-hydroxy-3-(all-trans-octaprenyl)benzoate + diphosphate. Its pathway is cofactor biosynthesis; ubiquinone biosynthesis. Functionally, catalyzes the prenylation of para-hydroxybenzoate (PHB) with an all-trans polyprenyl group. Mediates the second step in the final reaction sequence of ubiquinone-8 (UQ-8) biosynthesis, which is the condensation of the polyisoprenoid side chain with PHB, generating the first membrane-bound Q intermediate 3-octaprenyl-4-hydroxybenzoate. The chain is 4-hydroxybenzoate octaprenyltransferase from Histophilus somni (strain 2336) (Haemophilus somnus).